The sequence spans 700 residues: Elongation factor G (700 aa).

One can recognise a tr-type G domain in the interval 13–288; that stretch reads SKIRNIGITA…AVIDYLPAPD (276 aa). GTP contacts are provided by residues 22–29, 86–90, and 140–143; these read AHIDAGKT, DTPGH, and NKLD.

It belongs to the TRAFAC class translation factor GTPase superfamily. Classic translation factor GTPase family. EF-G/EF-2 subfamily.

Its subcellular location is the cytoplasm. Functionally, catalyzes the GTP-dependent ribosomal translocation step during translation elongation. During this step, the ribosome changes from the pre-translocational (PRE) to the post-translocational (POST) state as the newly formed A-site-bound peptidyl-tRNA and P-site-bound deacylated tRNA move to the P and E sites, respectively. Catalyzes the coordinated movement of the two tRNA molecules, the mRNA and conformational changes in the ribosome. In Gluconobacter oxydans (strain 621H) (Gluconobacter suboxydans), this protein is Elongation factor G.